The chain runs to 210 residues: Large ribosomal subunit protein uL4 (210 aa).

Over residues 41 to 51 (ANARQGTQSTK) the composition is skewed to polar residues. Disordered stretches follow at residues 41 to 60 (ANAR…QGSS) and 67 to 98 (KGTG…DFSK).

Belongs to the universal ribosomal protein uL4 family. As to quaternary structure, part of the 50S ribosomal subunit.

Its function is as follows. One of the primary rRNA binding proteins, this protein initially binds near the 5'-end of the 23S rRNA. It is important during the early stages of 50S assembly. It makes multiple contacts with different domains of the 23S rRNA in the assembled 50S subunit and ribosome. In terms of biological role, forms part of the polypeptide exit tunnel. This Dehalococcoides mccartyi (strain ATCC BAA-2266 / KCTC 15142 / 195) (Dehalococcoides ethenogenes (strain 195)) protein is Large ribosomal subunit protein uL4.